The chain runs to 466 residues: Vimentin (466 aa).

Residues M1–R13 are compositionally biased toward low complexity. The disordered stretch occupies residues M1–T32. S2 is subject to N-acetylserine. Residues S2–E95 form a head region. 5 positions are modified to phosphoserine: S5, S7, S8, S9, and S10. The O-linked (GlcNAc) serine; alternate glycan is linked to S7. T20 is subject to Phosphothreonine. A compositionally biased stretch (low complexity) spans G21 to T32. Phosphoserine is present on residues S25 and S26. A glycan (O-linked (GlcNAc) threonine) is linked at T33. S34, S39, S42, S47, S49, and S51 each carry phosphoserine. S34 carries an O-linked (GlcNAc) serine; alternate glycan. Y53 is subject to Phosphotyrosine. Phosphoserine is present on residues S55 and S56. Y61 bears the Phosphotyrosine mark. A phosphoserine mark is found at S66, S72, S73, S83, and S87. The coil 1A stretch occupies residues F96–L131. Residues F96–L131 are a coiled coil. The IF rod domain maps to E103–I411. K104 participates in a covalent cross-link: Glycyl lysine isopeptide (Lys-Gly) (interchain with G-Cter in SUMO2). Residue Y117 is modified to Phosphotyrosine. N6-acetyllysine; alternate is present on residues K120, K129, and K139. N6-succinyllysine; alternate occurs at positions 120 and 129. Residues K120, K129, and K139 each participate in a glycyl lysine isopeptide (Lys-Gly) (interchain with G-Cter in SUMO2); alternate cross-link. The linker 1 stretch occupies residues L132–E153. S144 is subject to Phosphoserine. Positions M154–L245 form a coiled coil. The tract at residues M154 to L245 is coil 1B. N6-acetyllysine is present on K168. K188 is subject to N6-acetyllysine; alternate. K188 bears the N6-succinyllysine; alternate mark. S214 is modified (phosphoserine). Residue K223 is modified to N6-acetyllysine; alternate. Residue K223 forms a Glycyl lysine isopeptide (Lys-Gly) (interchain with G-Cter in SUMO2); alternate linkage. A Phosphoserine modification is found at S226. K235 is modified (N6-acetyllysine). Positions Q246–A268 are linker 12. Residue K262 forms a Glycyl lysine isopeptide (Lys-Gly) (interchain with G-Cter in SUMO2) linkage. The interval L269–E407 is coil 2. K294 is modified (N6-acetyllysine; alternate). K294 bears the N6-succinyllysine; alternate mark. K294 participates in a covalent cross-link: Glycyl lysine isopeptide (Lys-Gly) (interchain with G-Cter in SUMO2); alternate. Phosphoserine is present on S299. Positions N303–E407 form a coiled coil. K313 participates in a covalent cross-link: Glycyl lysine isopeptide (Lys-Gly) (interchain with G-Cter in SUMO2). S325 is modified (phosphoserine). The short motif at L326–E329 is the [IL]-x-C-x-x-[DE] motif element. K373 is subject to N6-acetyllysine; alternate. K373 is covalently cross-linked (Glycyl lysine isopeptide (Lys-Gly) (interchain with G-Cter in SUMO2); alternate). The tail stretch occupies residues E408–E466. 3 positions are modified to phosphoserine: S409, S419, and S420. Residue T426 is modified to Phosphothreonine. At S430 the chain carries Phosphoserine. T436 is subject to Phosphothreonine. At S438 the chain carries Phosphoserine. K439 is covalently cross-linked (Glycyl lysine isopeptide (Lys-Gly) (interchain with G-Cter in SUMO2)). K445 is modified (N6-acetyllysine; alternate). N6-succinyllysine; alternate is present on K445. K445 is covalently cross-linked (Glycyl lysine isopeptide (Lys-Gly) (interchain with G-Cter in SUMO2); alternate). K445 is covalently cross-linked (Glycyl lysine isopeptide (Lys-Gly) (interchain with G-Cter in SUMO1); alternate). A phosphothreonine mark is found at T446 and T458. At S459 the chain carries Phosphoserine.

Belongs to the intermediate filament family. In terms of assembly, homomer assembled from elementary dimers. Identified in complexes that contain VIM, EZR, AHNAK, BFSP1, BFSP2, ANK2, PLEC, PRX and spectrin. Interacts with BCAS3. Interacts with LGSN. Interacts with SYNM. Interacts (via rod region) with PLEC (via CH 1 domain). Interacts with STK33. Interacts with LARP6. Interacts with RAB8B. Interacts with TOR1A; the interaction associates TOR1A with the cytoskeleton. Interacts with TOR1AIP1. Interacts with TOR1AIP1. Interacts with DIAPH1. Interacts with EPPK1; interaction is dependent of higher-order structure of intermediate filament. Interacts with the non-receptor tyrosine kinase SRMS; the interaction leads to phosphorylation of VIM. Interacts with NOD2. Interacts (via head region) with CORO1C. Interacts with HDGF. Interacts with PRKCE (via phorbol-ester/DAG-type 2 domain). Interacts with BFSP2. Interacts with PPL. Interacts with PKP1 and PKP2. Interacts with SCRIB (via PDZ domains); the interaction protects SCRIB from proteasomal degradation and facilitates SCRIB localization to intermediate filaments, the interaction is reduced by cell contact inhibition. Filament disassembly during mitosis is promoted by phosphorylation at Ser-55 as well as by nestin. One of the most prominent phosphoproteins in various cells of mesenchymal origin. Phosphorylation is enhanced during cell division, at which time vimentin filaments are significantly reorganized. Phosphorylation by PKN1 inhibits the formation of filaments. Phosphorylated at Ser-56 by CDK5 during neutrophil secretion in the cytoplasm. Phosphorylated by STK33. Phosphorylated on tyrosine residues by SRMS. Post-translationally, O-glycosylated during cytokinesis at sites identical or close to phosphorylation sites, this interferes with the phosphorylation status. In terms of processing, S-nitrosylation is induced by interferon-gamma and oxidatively-modified low-densitity lipoprotein (LDL(ox)) possibly implicating the iNOS-S100A8/9 transnitrosylase complex.

The protein resides in the cytoplasm. Its subcellular location is the cytoskeleton. The protein localises to the nucleus matrix. It localises to the cell membrane. Functionally, vimentins are class-III intermediate filaments found in various non-epithelial cells, especially mesenchymal cells. Vimentin is attached to the nucleus, endoplasmic reticulum, and mitochondria, either laterally or terminally. Plays a role in cell directional movement, orientation, cell sheet organization and Golgi complex polarization at the cell migration front. Protects SCRIB from proteasomal degradation and facilitates its localization to intermediate filaments in a cell contact-mediated manner. In terms of biological role, involved with LARP6 in the stabilization of type I collagen mRNAs for CO1A1 and CO1A2. This is Vimentin (VIM) from Canis lupus familiaris (Dog).